The following is a 144-amino-acid chain: Large ribosomal subunit protein uL15 (144 aa).

Residues 1–57 are disordered; that stretch reads MELNNLKPAEGAKHAKRRVGRGIGSGLGKTAGRGHKGQKSRSGGFHKVGFEGGQMPL. Residues 21–31 are compositionally biased toward gly residues; that stretch reads RGIGSGLGKTA.

It belongs to the universal ribosomal protein uL15 family. In terms of assembly, part of the 50S ribosomal subunit.

Binds to the 23S rRNA. The polypeptide is Large ribosomal subunit protein uL15 (Paraburkholderia xenovorans (strain LB400)).